A 943-amino-acid chain; its full sequence is Conidiophore development regulator abaA (943 aa).

Disordered stretches follow at residues 1–69 (MSSS…FNGG) and 111–133 (TSRQ…HQRG). Over residues 29-43 (IDTRRSFHGDSRLPL) the composition is skewed to basic and acidic residues. The span at 59-68 (PSSAHSSFNG) shows a compositional bias: polar residues. The TEA DNA-binding region spans 161 to 254 (QKDKGGVWRR…QVVKKFFEDL (94 aa)). Residues 537–555 (EHQRKKEKRSCGKKPDLER) are compositionally biased toward basic and acidic residues. Disordered stretches follow at residues 537-575 (EHQR…AAWT) and 809-901 (GAAG…HHPG). Residues 865-889 (DSWTAGSSAGGAPAATPTGPDWGPT) show a composition bias toward low complexity.

Belongs to the TEC1 family.

It is found in the nucleus. BrlA, abaA and wetA are pivotal regulators of conidiophore development and conidium maturation. They act individually and together to regulate their own expression and that of numerous other sporulation-specific genes. Binds to the sequence 5'-CATTCY-3', where Y is a pyrimidine, making both major- and minor-groove contacts. This Hapsidospora chrysogena (Acremonium chrysogenum) protein is Conidiophore development regulator abaA.